The following is a 673-amino-acid chain: Estrogen receptor beta (673 aa).

A modulating region spans residues 1–181 (MASSPGLDPH…SAVGKADMHF (181 aa)). 2 NR C4-type zinc fingers span residues 182-202 (CAVCHDYASGYHYGVWSCEGC) and 218-242 (CPATNQCTIDKNRRKSCQACRLRKC). The segment at residues 182–247 (CAVCHDYASG…RLRKCYEVGM (66 aa)) is a DNA-binding region (nuclear receptor). One can recognise an NR LBD domain in the interval 316–552 (SPEEFISRIM…DLLLEMLDAN (237 aa)). Positions 553-602 (TSSGGSQPSSSPSSETYSDQHQYPQPPSHLHPGSEQTTADHAIVPPLGPT) are disordered. Over residues 554 to 566 (SSGGSQPSSSPSS) the composition is skewed to low complexity.

Belongs to the nuclear hormone receptor family. NR3 subfamily. In terms of assembly, binds DNA as a homodimer. Can form a heterodimer with ER-alpha. Abundant in the liver and testes, less abundant in the ovary and barely detectable in the muscle.

Its subcellular location is the nucleus. Its function is as follows. Binds estrogens with an affinity similar to that of ER-alpha, and activates expression of reporter genes containing estrogen response elements (ERE) in an estrogen-dependent manner. The polypeptide is Estrogen receptor beta (esr2) (Micropogonias undulatus (Atlantic croaker)).